Consider the following 349-residue polypeptide: Mediator of RNA polymerase II transcription subunit 19 (349 aa).

Residues 1–28 (MSFHPQTPQSPSHFSPSSSDQSTSMSGS) show a composition bias toward low complexity. 2 disordered regions span residues 1 to 81 (MSFH…EQKK) and 238 to 349 (AHLN…VSGI). Over residues 29–53 (IVSTTTTLPTPAHSVNGSSLANDMS) the composition is skewed to polar residues. The segment covering 70 to 81 (TSDDVGDREQKK) has biased composition (basic and acidic residues). Positions 330-341 (QSYAQARQQSSY) are enriched in low complexity.

Belongs to the Mediator complex subunit 19 family. Component of the Mediator complex.

It is found in the nucleus. Its function is as follows. Component of the Mediator complex, a coactivator involved in the regulated transcription of nearly all RNA polymerase II-dependent genes. Mediator functions as a bridge to convey information from gene-specific regulatory proteins to the basal RNA polymerase II transcription machinery. Mediator is recruited to promoters by direct interactions with regulatory proteins and serves as a scaffold for the assembly of a functional preinitiation complex with RNA polymerase II and the general transcription factors. This chain is Mediator of RNA polymerase II transcription subunit 19 (rox3), found in Neurospora crassa (strain ATCC 24698 / 74-OR23-1A / CBS 708.71 / DSM 1257 / FGSC 987).